A 368-amino-acid chain; its full sequence is Flagellar P-ring protein (368 aa).

An N-terminal signal peptide occupies residues 1–24 (MNSIFRKIVFAAFLLLALPQFALA).

The protein belongs to the FlgI family. In terms of assembly, the basal body constitutes a major portion of the flagellar organelle and consists of four rings (L,P,S, and M) mounted on a central rod.

It localises to the periplasm. The protein localises to the bacterial flagellum basal body. In terms of biological role, assembles around the rod to form the L-ring and probably protects the motor/basal body from shearing forces during rotation. The polypeptide is Flagellar P-ring protein (Geotalea uraniireducens (strain Rf4) (Geobacter uraniireducens)).